The sequence spans 230 residues: Probable GTP-binding protein EngB (230 aa).

The EngB-type G domain maps to 36–224; that stretch reads ERPKVIVMGR…KHRINKRINI (189 aa). GTP contacts are provided by residues 44 to 51, 69 to 73, 86 to 89, 166 to 169, and 201 to 203; these read GRSNVGKS, GVTLK, DLPG, NKMD, and VPA. Positions 51 and 71 each coordinate Mg(2+).

This sequence belongs to the TRAFAC class TrmE-Era-EngA-EngB-Septin-like GTPase superfamily. EngB GTPase family. Mg(2+) is required as a cofactor.

Necessary for normal cell division and for the maintenance of normal septation. The polypeptide is Probable GTP-binding protein EngB (Methanococcus maripaludis (strain DSM 14266 / JCM 13030 / NBRC 101832 / S2 / LL)).